The sequence spans 335 residues: MDKKARAHTVIVCLVGALSLACAYLLGGSMKYLRGDVSRFWTSSRMQRHPAHSSQPVVRTFTDADGYTCLDQAHPHTIVIDATRVRVSVQVCAQRRSLAYKVVKNSVYDPLSIHLDPTMLVLRRGKKTVRESTPPADSPGVMQSALNVRDTLRDWFYTFWKNVWGSRWGHSVVPIEAIICVPAQHNVHNLKVRVKDSSLRLEGIEVRFADVYAHASELKLNGVRTDRTLLHTTDGDTQCSRCVLSDAHLYTDRGTLSFDGTLQGNSEIGTRTGTVVARFTERQSYYALSVFSGHGAVYINDQRVRKTLGTCLSTGGSAQLCVRNERGVLHVYFPQ.

Residues 1 to 21 form the signal peptide; it reads MDKKARAHTVIVCLVGALSLA. Cys22 is lipidated: N-palmitoyl cysteine. A lipid anchor (S-diacylglycerol cysteine) is attached at Cys22.

The protein localises to the cell membrane. This is an uncharacterized protein from Treponema pallidum (strain Nichols).